A 458-amino-acid chain; its full sequence is Bifunctional protein GlmU (458 aa).

The interval 1 to 228 is pyrophosphorylase; the sequence is MHPKLDILIL…DWEVLGVNSK (228 aa). UDP-N-acetyl-alpha-D-glucosamine-binding positions include 10-13, Lys-24, Gln-75, 80-81, 102-104, Gly-139, Glu-153, Asn-168, and Asn-226; these read LAAG, GT, and YGD. A Mg(2+)-binding site is contributed by Asp-104. Asn-226 serves as a coordination point for Mg(2+). The linker stretch occupies residues 229–249; sequence AQLAELERIHQNEVAQRLLAD. An N-acetyltransferase region spans residues 250-458; sequence GVTLMDPARL…KRPIKPKKEG (209 aa). UDP-N-acetyl-alpha-D-glucosamine is bound by residues Arg-332 and Lys-350. The Proton acceptor role is filled by His-362. UDP-N-acetyl-alpha-D-glucosamine contacts are provided by Tyr-365 and Asn-376. Acetyl-CoA-binding positions include Ala-379, 385–386, Ser-404, Ala-422, and Arg-439; that span reads NY.

In the N-terminal section; belongs to the N-acetylglucosamine-1-phosphate uridyltransferase family. The protein in the C-terminal section; belongs to the transferase hexapeptide repeat family. In terms of assembly, homotrimer. Mg(2+) serves as cofactor.

It is found in the cytoplasm. The enzyme catalyses alpha-D-glucosamine 1-phosphate + acetyl-CoA = N-acetyl-alpha-D-glucosamine 1-phosphate + CoA + H(+). It carries out the reaction N-acetyl-alpha-D-glucosamine 1-phosphate + UTP + H(+) = UDP-N-acetyl-alpha-D-glucosamine + diphosphate. It participates in nucleotide-sugar biosynthesis; UDP-N-acetyl-alpha-D-glucosamine biosynthesis; N-acetyl-alpha-D-glucosamine 1-phosphate from alpha-D-glucosamine 6-phosphate (route II): step 2/2. It functions in the pathway nucleotide-sugar biosynthesis; UDP-N-acetyl-alpha-D-glucosamine biosynthesis; UDP-N-acetyl-alpha-D-glucosamine from N-acetyl-alpha-D-glucosamine 1-phosphate: step 1/1. The protein operates within bacterial outer membrane biogenesis; LPS lipid A biosynthesis. Its function is as follows. Catalyzes the last two sequential reactions in the de novo biosynthetic pathway for UDP-N-acetylglucosamine (UDP-GlcNAc). The C-terminal domain catalyzes the transfer of acetyl group from acetyl coenzyme A to glucosamine-1-phosphate (GlcN-1-P) to produce N-acetylglucosamine-1-phosphate (GlcNAc-1-P), which is converted into UDP-GlcNAc by the transfer of uridine 5-monophosphate (from uridine 5-triphosphate), a reaction catalyzed by the N-terminal domain. In Thiobacillus denitrificans (strain ATCC 25259 / T1), this protein is Bifunctional protein GlmU.